The primary structure comprises 639 residues: Lactose permease (639 aa).

The tract at residues Met1–Thr473 is permease. The next 12 helical transmembrane spans lie at Phe20–Val40, Ile59–Ile79, Val99–Leu119, Trp124–Phe144, Ile176–Ala196, Trp207–Phe227, Leu264–Phe284, Phe294–Val314, Lys322–Gly342, Met347–Leu367, Ile398–Gly418, and Phe433–Leu453. The 105-residue stretch at Asn505–Gln609 folds into the PTS EIIA type-1 domain. His557 is subject to Phosphohistidine; by HPr.

In the N-terminal section; belongs to the sodium:galactoside symporter (TC 2.A.2) family.

The protein localises to the cell membrane. Functionally, responsible for transport of beta-galactosides into the cell, with the concomitant uptake of protons (symport system), and also for transport of homologous and heterologous exchange of beta-galactosides. The protein is Lactose permease (lacS) of Leuconostoc lactis.